The following is a 165-amino-acid chain: Mid1-interacting protein 1-like (165 aa).

The segment at 46–67 (DQESHASVSHNNNNNNEPSFPN) is disordered.

Belongs to the SPOT14 family.

Its subcellular location is the nucleus. It localises to the cytoplasm. The protein localises to the cytoskeleton. Its function is as follows. Involved in stabilization of microtubules. May play a role in the regulation of lipogenesis. The chain is Mid1-interacting protein 1-like from Danio rerio (Zebrafish).